Consider the following 501-residue polypeptide: Iroquois-class homeodomain protein IRX-3 (501 aa).

The homeobox; TALE-type DNA-binding region spans 125-188; sequence FGDPSRPKNA…ANARRRLKKE (64 aa). Residues 190–381 are disordered; it reads KMTWAPRSRT…SPPGAAVAPS (192 aa). Acidic residues-rich tracts occupy residues 210–220 and 227–258; these read REEEDEEEDEE and ELEE…DLEN. Phosphoserine occurs at positions 323 and 326. Pro residues predominate over residues 324 to 339; sequence LPSPPVSLDPCAPAPA.

It belongs to the TALE/IRO homeobox family.

It localises to the nucleus. Transcription factor involved in SHH-dependent neural patterning. Together with NKX2-2 and NKX6-1 acts to restrict the generation of motor neurons to the appropriate region of the neural tube. Belongs to the class I proteins of neuronal progenitor factors, which are repressed by SHH signals. Involved in the transcriptional repression of MNX1 in non-motor neuron cells. Acts as a regulator of energy metabolism. The polypeptide is Iroquois-class homeodomain protein IRX-3 (IRX3) (Homo sapiens (Human)).